The chain runs to 210 residues: Large ribosomal subunit protein uL3 (210 aa).

The disordered stretch occupies residues 133 to 156; it reads ASHGNSLSHRVPGSIGQNQTPGKV. Glutamine 151 carries the N5-methylglutamine modification.

This sequence belongs to the universal ribosomal protein uL3 family. Part of the 50S ribosomal subunit. Forms a cluster with proteins L14 and L19. Methylated by PrmB.

Functionally, one of the primary rRNA binding proteins, it binds directly near the 3'-end of the 23S rRNA, where it nucleates assembly of the 50S subunit. The sequence is that of Large ribosomal subunit protein uL3 from Hamiltonella defensa subsp. Acyrthosiphon pisum (strain 5AT).